A 397-amino-acid polypeptide reads, in one-letter code: Elongation factor Tu-1 (397 aa).

A tr-type G domain is found at 10–206 (KPHVNIGTIG…AVDENIPEPE (197 aa)). The G1 stretch occupies residues 19 to 26 (GHIDHGKT). 19–26 (GHIDHGKT) is a binding site for GTP. Thr-26 serves as a coordination point for Mg(2+). Residues 62-66 (GITIS) form a G2 region. A G3 region spans residues 83-86 (DCPG). Residues 83 to 87 (DCPGH) and 138 to 141 (NKAD) contribute to the GTP site. Positions 138 to 141 (NKAD) are G4. The segment at 176–178 (SAL) is G5. Thr-386 is subject to Phosphothreonine.

Belongs to the TRAFAC class translation factor GTPase superfamily. Classic translation factor GTPase family. EF-Tu/EF-1A subfamily. Monomer. Phosphorylated on threonine and serine.

It is found in the cytoplasm. It carries out the reaction GTP + H2O = GDP + phosphate + H(+). Functionally, GTP hydrolase that promotes the GTP-dependent binding of aminoacyl-tRNA to the A-site of ribosomes during protein biosynthesis. This chain is Elongation factor Tu-1, found in Streptomyces collinus.